Reading from the N-terminus, the 520-residue chain is MSTNPKPQRKTKRNTNRRPQDVKFPGGGQIVGGVYLLTRRGPRLGVRATRKTSERSQPRGRRQPIPKARRPEGRAWAQPGYPWPLYGNEGLGWAGWLLSPRGSRPSWGPTDPRRRSRNLGKVIDTLTCGFADLMGYIPLVGAPLGGASRALAHGVRVLEDGVNYATGNLPGCSFSIFLSALMSCLTTPASAYEVRNVSGIYHVTNDCSNSSIAYEAAGMIMHTPGCVPCVRENNSSRCWVALTPTLAARNASVPTTTIRRHVDLLVGAATLCSAMYVGDLCGSVFLVSQLFTFSPRRYETVQDCNCSIYPGHVSGHRMAWDMMMNWSPTAALVVSQLLRIPQAVVDMVAGAHWGVLAGLAYYSMVGNWAKVLIVMLLFAGVDGANTHTVGGTEGFATQRLTSLFALGPSQKIQLINTNGSWHINRTALNCNDSFKTGFLAALFYVHKFNASGCPEHMASCRPIDKFDQGWGPVTYAEPSISEQRPYCWHYAPRPCGTIPASEVCGPVYCFTPSPVVVGTT.

Residue serine 2 is modified to N-acetylserine; by host. Positions 2-23 (STNPKPQRKTKRNTNRRPQDVK) are interaction with STAT1. The tract at residues 2 to 58 (STNPKPQRKTKRNTNRRPQDVKFPGGGQIVGGVYLLTRRGPRLGVRATRKTSERSQP) is interaction with EIF2AK2/PKR. The tract at residues 2–59 (STNPKPQRKTKRNTNRRPQDVKFPGGGQIVGGVYLLTRRGPRLGVRATRKTSERSQPR) is interaction with DDX3X. A disordered region spans residues 2–75 (STNPKPQRKT…PKARRPEGRA (74 aa)). Residues 2-168 (STNPKPQRKT…EDGVNYATGN (167 aa)) are Cytoplasmic-facing. Short sequence motifs (nuclear localization signal) lie at residues 5–13 (PKPQRKTKR) and 38–43 (TRRGPR). The segment covering 7–16 (PQRKTKRNTN) has biased composition (basic residues). A Phosphoserine; by host modification is found at serine 53. 2 consecutive short sequence motifs (nuclear localization signal) follow at residues 58 to 64 (PRGRRQP) and 66 to 71 (PKARRP). Over residues 58–68 (PRGRRQPIPKA) the composition is skewed to basic residues. Serine 99 bears the Phosphoserine; by host mark. Residues 112–152 (PRRRSRNLGKVIDTLTCGFADLMGYIPLVGAPLGGASRALA) are important for endoplasmic reticulum and mitochondrial localization. Position 116 is a phosphoserine; by host PKA (serine 116). Positions 122–173 (VIDTLTCGFADLMGYIPLVGAPLGGASRALAHGVRVLEDGVNYATGNLPGCS) are interaction with APOA2. The important for lipid droplets localization stretch occupies residues 164-167 (YATG). The helical transmembrane segment at 169-189 (LPGCSFSIFLSALMSCLTTPA) threads the bilayer. A propeptide spans 178-191 (LSALMSCLTTPASA) (ER anchor for the core protein, removed in mature form by host signal peptidase). Over 190–358 (SAYEVRNVSG…AGAHWGVLAG (169 aa)) the chain is Lumenal. 4 N-linked (GlcNAc...) asparagine; by host glycosylation sites follow: asparagine 196, asparagine 209, asparagine 234, and asparagine 250. The tract at residues 265 to 296 (LVGAATLCSAMYVGDLCGSVFLVSQLFTFSPR) is important for fusion. Asparagine 305 carries an N-linked (GlcNAc...) asparagine; by host glycan. The chain crosses the membrane as a helical span at residues 359–379 (LAYYSMVGNWAKVLIVMLLFA). At 380-520 (GVDGANTHTV…TPSPVVVGTT (141 aa)) the chain is on the lumenal side. Residues 385–411 (NTHTVGGTEGFATQRLTSLFALGPSQK) are HVR1. The N-linked (GlcNAc...) asparagine; by host glycan is linked to asparagine 418. Residues asparagine 424, asparagine 431, and asparagine 449 are each glycosylated (N-linked (GlcNAc...) (high mannose) asparagine; by host). Cysteine 453 and cysteine 460 are oxidised to a cystine. The segment at 474–479 (TYAEPS) is HVR2. The interval 480 to 493 (ISEQRPYCWHYAPR) is CD81-binding 1. 2 disulfides stabilise this stretch: cysteine 487–cysteine 495 and cysteine 504–cysteine 509.

Belongs to the hepacivirus polyprotein family. In terms of assembly, homooligomer. Interacts with E1 (via C-terminus). Interacts with the non-structural protein 5A. Interacts (via N-terminus) with host STAT1 (via SH2 domain); this interaction results in decreased STAT1 phosphorylation and ubiquitin-mediated proteasome-dependent STAT1 degradation, leading to decreased IFN-stimulated gene transcription. Interacts with host STAT3; this interaction constitutively activates STAT3. Interacts with host LTBR receptor. Interacts with host TNFRSF1A receptor and possibly induces apoptosis. Interacts with host HNRPK. Interacts with host YWHAE. Interacts with host UBE3A/E6AP. Interacts with host DDX3X. Interacts with host APOA2. Interacts with host RXRA protein. Interacts with host SP110 isoform 3/Sp110b; this interaction sequesters the transcriptional corepressor SP110 away from the nucleus. Interacts with host CREB3 nuclear transcription protein; this interaction triggers cell transformation. Interacts with host ACY3. Interacts with host C1QR1. Interacts with host RBM24; this interaction, which enhances the interaction of the mature core protein with 5'-UTR, may inhibit viral translation and favor replication. Interacts with host EIF2AK2/PKR; this interaction induces the autophosphorylation of EIF2AK2. Part of the viral assembly initiation complex composed of NS2, E1, E2, NS3, NS4A, NS5A and the mature core protein. Forms a heterodimer with envelope glycoprotein E2. Interacts with mature core protein. Interacts with protease NS2. The heterodimer E1/E2 interacts with host CLDN1; this interaction plays a role in viral entry into host cell. Interacts with host SPSB2 (via C-terminus). Part of the viral assembly initiation complex composed of NS2, E1, E2, NS3, NS4A, NS5A and the mature core protein. As to quaternary structure, forms a heterodimer with envelope glycoprotein E1. Interacts with host CD81 and SCARB1 receptors; these interactions play a role in viral entry into host cell. Interacts with host EIF2AK2/PKR; this interaction inhibits EIF2AK2 and probably allows the virus to evade the innate immune response. Interacts with host CD209/DC-SIGN and CLEC4M/DC-SIGNR. Interact with host SPCS1; this interaction is essential for viral particle assembly. Interacts with protease NS2. The heterodimer E1/E2 interacts with host CLDN1; this interaction plays a role in viral entry into host cell. Part of the viral assembly initiation complex composed of NS2, E1, E2, NS3, NS4A, NS5A and the mature core protein. Post-translationally, specific enzymatic cleavages in vivo yield mature proteins. The structural proteins, core, E1, E2 and p7 are produced by proteolytic processing by host signal peptidases. The core protein precursor is synthesized as a 23 kDa, which is retained in the ER membrane through the hydrophobic signal peptide. Cleavage by the signal peptidase releases the 21 kDa mature core protein. The cleavage of the core protein precursor occurs between aminoacids 176 and 188 but the exact cleavage site is not known. Some degraded forms of the core protein appear as well during the course of infection. The other proteins (p7, NS2, NS3, NS4A, NS4B, NS5A and NS5B) are cleaved by the viral proteases. Autoprocessing between NS2 and NS3 is mediated by the NS2 cysteine protease catalytic domain and regulated by the NS3 N-terminal domain. In terms of processing, phosphorylated by host PKC and PKA. Ubiquitinated; mediated by UBE3A and leading to core protein subsequent proteasomal degradation. Post-translationally, highly N-glycosylated.

The protein localises to the host endoplasmic reticulum membrane. It localises to the host mitochondrion membrane. It is found in the virion. Its subcellular location is the host cytoplasm. The protein resides in the host nucleus. The protein localises to the host lipid droplet. It localises to the virion membrane. Functionally, packages viral RNA to form a viral nucleocapsid, and promotes virion budding. Participates in the viral particle production as a result of its interaction with the non-structural protein 5A. Binds RNA and may function as a RNA chaperone to induce the RNA structural rearrangements taking place during virus replication. Modulates viral translation initiation by interacting with viral IRES and 40S ribosomal subunit. Affects various cell signaling pathways, host immunity and lipid metabolism. Prevents the establishment of cellular antiviral state by blocking the interferon-alpha/beta (IFN-alpha/beta) and IFN-gamma signaling pathways and by blocking the formation of phosphorylated STAT1 and promoting ubiquitin-mediated proteasome-dependent degradation of STAT1. Activates STAT3 leading to cellular transformation. Regulates the activity of cellular genes, including c-myc and c-fos. May repress the promoter of p53, and sequester CREB3 and SP110 isoform 3/Sp110b in the cytoplasm. Represses cell cycle negative regulating factor CDKN1A, thereby interrupting an important check point of normal cell cycle regulation. Targets transcription factors involved in the regulation of inflammatory responses and in the immune response: suppresses TNF-induced NF-kappa-B activation, and activates AP-1. Binds to dendritic cells (DCs) via C1QR1, resulting in down-regulation of T-lymphocytes proliferation. Alters lipid metabolism by interacting with hepatocellular proteins involved in lipid accumulation and storage. Induces up-regulation of FAS promoter activity, and thereby contributes to the increased triglyceride accumulation in hepatocytes (steatosis). Forms a heterodimer with envelope glycoprotein E2, which mediates virus attachment to the host cell, virion internalization through clathrin-dependent endocytosis and fusion with host membrane. Fusion with the host cell is most likely mediated by both E1 and E2, through conformational rearrangements of the heterodimer required for fusion rather than a classical class II fusion mechanism. E1/E2 heterodimer binds host apolipoproteins such as APOB and ApoE thereby forming a lipo-viro-particle (LVP). APOE associated to the LVP allows the initial virus attachment to cell surface receptors such as the heparan sulfate proteoglycans (HSPGs), syndecan-1 (SDC1), syndecan-1 (SDC2), the low-density lipoprotein receptor (LDLR) and scavenger receptor class B type I (SCARB1). The cholesterol transfer activity of SCARB1 allows E2 exposure and binding of E2 to SCARB1 and the tetraspanin CD81. E1/E2 heterodimer binding on CD81 activates the epithelial growth factor receptor (EGFR) signaling pathway. Diffusion of the complex E1-E2-EGFR-SCARB1-CD81 to the cell lateral membrane allows further interaction with Claudin 1 (CLDN1) and occludin (OCLN) to finally trigger HCV entry. In terms of biological role, forms a heterodimer with envelope glycoprotein E1, which mediates virus attachment to the host cell, virion internalization through clathrin-dependent endocytosis and fusion with host membrane. Fusion with the host cell is most likely mediated by both E1 and E2, through conformational rearrangements of the heterodimer required for fusion rather than a classical class II fusion mechanism. The interaction between envelope glycoprotein E2 and host apolipoprotein E/APOE allows the proper assembly, maturation and infectivity of the viral particles. This interaction is probably promoted via the up-regulation of cellular autophagy by the virus. E1/E2 heterodimer binds host apolipoproteins such as APOB and APOE thereby forming a lipo-viro-particle (LVP). APOE associated to the LVP allows the initial virus attachment to cell surface receptors such as the heparan sulfate proteoglycans (HSPGs), syndecan-1 (SDC1), syndecan-1 (SDC2), the low-density lipoprotein receptor (LDLR) and scavenger receptor class B type I (SCARB1). The cholesterol transfer activity of SCARB1 allows E2 exposure and binding of E2 to SCARB1 and the tetraspanin CD81. E1/E2 heterodimer binding on CD81 activates the epithelial growth factor receptor (EGFR) signaling pathway. Diffusion of the complex E1-E2-EGFR-SCARB1-CD81 to the cell lateral membrane allows further interaction with Claudin 1 (CLDN1) and occludin (OCLN) to finally trigger HCV entry. Inhibits host EIF2AK2/PKR activation, preventing the establishment of an antiviral state. Viral ligand for CD209/DC-SIGN and CLEC4M/DC-SIGNR, which are respectively found on dendritic cells (DCs), and on liver sinusoidal endothelial cells and macrophage-like cells of lymph node sinuses. These interactions allow the capture of circulating HCV particles by these cells and subsequent facilitated transmission to permissive cells such as hepatocytes and lymphocyte subpopulations. The polypeptide is Genome polyprotein (Hepatitis C virus (isolate HCV-KF) (HCV)).